The chain runs to 130 residues: Small ribosomal subunit protein uS11 (130 aa).

This sequence belongs to the universal ribosomal protein uS11 family. As to quaternary structure, part of the 30S ribosomal subunit. Interacts with proteins S7 and S18. Binds to IF-3.

Located on the platform of the 30S subunit, it bridges several disparate RNA helices of the 16S rRNA. Forms part of the Shine-Dalgarno cleft in the 70S ribosome. The protein is Small ribosomal subunit protein uS11 of Sulfurimonas denitrificans (strain ATCC 33889 / DSM 1251) (Thiomicrospira denitrificans (strain ATCC 33889 / DSM 1251)).